We begin with the raw amino-acid sequence, 325 residues long: 5-dehydro-2-deoxygluconokinase (325 aa).

This sequence belongs to the carbohydrate kinase PfkB family.

It carries out the reaction 5-dehydro-2-deoxy-D-gluconate + ATP = 6-phospho-5-dehydro-2-deoxy-D-gluconate + ADP + H(+). The protein operates within polyol metabolism; myo-inositol degradation into acetyl-CoA; acetyl-CoA from myo-inositol: step 5/7. Functionally, catalyzes the phosphorylation of 5-dehydro-2-deoxy-D-gluconate (2-deoxy-5-keto-D-gluconate or DKG) to 6-phospho-5-dehydro-2-deoxy-D-gluconate (DKGP). This Bacillus subtilis (strain 168) protein is 5-dehydro-2-deoxygluconokinase (iolC).